A 403-amino-acid chain; its full sequence is Glyceraldehyde-3-phosphate dehydrogenase A, chloroplastic (403 aa).

A chloroplast-targeting transit peptide spans 1-66; it reads MASSMLSATT…GGPRRAPTEA (66 aa). Residues 77 to 78, D102, and R147 each bind NADP(+); that span reads RI. D-glyceraldehyde 3-phosphate is bound by residues 219 to 221, T250, R265, 278 to 279, and R301; these read SCT and TG. C220 acts as the Nucleophile in catalysis. NADP(+) is bound at residue N383.

The protein belongs to the glyceraldehyde-3-phosphate dehydrogenase family. As to quaternary structure, tetramer of either four A chains (GAPDH 2) or two A and two B chains (GAPDH 1).

It is found in the plastid. Its subcellular location is the chloroplast. It carries out the reaction D-glyceraldehyde 3-phosphate + phosphate + NADP(+) = (2R)-3-phospho-glyceroyl phosphate + NADPH + H(+). It participates in carbohydrate biosynthesis; Calvin cycle. This Zea mays (Maize) protein is Glyceraldehyde-3-phosphate dehydrogenase A, chloroplastic (GAPA).